A 131-amino-acid chain; its full sequence is Small ribosomal subunit protein uS8 (131 aa).

Belongs to the universal ribosomal protein uS8 family. As to quaternary structure, part of the 30S ribosomal subunit. Contacts proteins S5 and S12.

Its function is as follows. One of the primary rRNA binding proteins, it binds directly to 16S rRNA central domain where it helps coordinate assembly of the platform of the 30S subunit. In Chlorobaculum tepidum (strain ATCC 49652 / DSM 12025 / NBRC 103806 / TLS) (Chlorobium tepidum), this protein is Small ribosomal subunit protein uS8.